A 101-amino-acid chain; its full sequence is Citrate lyase acyl carrier protein (101 aa).

Ser-14 is modified (O-(phosphoribosyl dephospho-coenzyme A)serine).

The protein belongs to the CitD family. In terms of assembly, oligomer with a subunit composition of (alpha,beta,gamma)6.

Its subcellular location is the cytoplasm. In terms of biological role, covalent carrier of the coenzyme of citrate lyase. This Clostridium perfringens (strain 13 / Type A) protein is Citrate lyase acyl carrier protein.